Consider the following 343-residue polypeptide: MSAFTPASEVLLRHSDDFEQSRILFAGDLQDDLPARLDTAASRAHTQQFHHWQVLSRQMGDNARFSLVATADDVADCDTLIYYWPKNKPEAQFQLMNLLSLLPVGTDIFVVGENRSGVRSAEQMLADYAPLNKVDSARRCGLYFGRLEKQPVFDANKFWGEYSVDGLTVKTLPGVFSRDGLDVGSQLLLSTLTPHTKGKVLDVGCGAGVLSVAFARHSPKIRLTLCDVSAPAVEASRATLAANSVEGEVFASNVFSEVKGRFDMIISNPPFHDGMQTSLDAAQTLIRGAVRHLNSGGELRIVANAFLPYPDVLDETFGFHEVIAQTGRFKVYRAIMTRQAKKG.

Belongs to the methyltransferase superfamily. RsmC family. As to quaternary structure, monomer.

The protein resides in the cytoplasm. The enzyme catalyses guanosine(1207) in 16S rRNA + S-adenosyl-L-methionine = N(2)-methylguanosine(1207) in 16S rRNA + S-adenosyl-L-homocysteine + H(+). Specifically methylates the guanine in position 1207 of 16S rRNA in the 30S particle. In Escherichia coli O6:H1 (strain CFT073 / ATCC 700928 / UPEC), this protein is Ribosomal RNA small subunit methyltransferase C.